Reading from the N-terminus, the 154-residue chain is Transcriptional regulator MraZ (154 aa).

SpoVT-AbrB domains lie at 6-53 (NSEA…PENV) and 83-126 (VEVI…SKEI).

The protein belongs to the MraZ family. Forms oligomers.

The protein resides in the cytoplasm. It localises to the nucleoid. This is Transcriptional regulator MraZ from Phocaeicola vulgatus (strain ATCC 8482 / DSM 1447 / JCM 5826 / CCUG 4940 / NBRC 14291 / NCTC 11154) (Bacteroides vulgatus).